The chain runs to 400 residues: Acetylornithine aminotransferase (400 aa).

Residues 106-107 and phenylalanine 132 each bind pyridoxal 5'-phosphate; that span reads GA. Arginine 135 provides a ligand contact to N(2)-acetyl-L-ornithine. Position 217–220 (217–220) interacts with pyridoxal 5'-phosphate; it reads DEVQ. Lysine 246 carries the post-translational modification N6-(pyridoxal phosphate)lysine. Serine 274 lines the N(2)-acetyl-L-ornithine pocket. Threonine 275 provides a ligand contact to pyridoxal 5'-phosphate.

It belongs to the class-III pyridoxal-phosphate-dependent aminotransferase family. ArgD subfamily. In terms of assembly, homodimer. Pyridoxal 5'-phosphate is required as a cofactor.

The protein localises to the cytoplasm. It catalyses the reaction N(2)-acetyl-L-ornithine + 2-oxoglutarate = N-acetyl-L-glutamate 5-semialdehyde + L-glutamate. It participates in amino-acid biosynthesis; L-arginine biosynthesis; N(2)-acetyl-L-ornithine from L-glutamate: step 4/4. The polypeptide is Acetylornithine aminotransferase (Streptomyces clavuligerus).